A 191-amino-acid polypeptide reads, in one-letter code: Protein GrpE (191 aa).

This sequence belongs to the GrpE family. In terms of assembly, homodimer.

Its subcellular location is the cytoplasm. In terms of biological role, participates actively in the response to hyperosmotic and heat shock by preventing the aggregation of stress-denatured proteins, in association with DnaK and GrpE. It is the nucleotide exchange factor for DnaK and may function as a thermosensor. Unfolded proteins bind initially to DnaJ; upon interaction with the DnaJ-bound protein, DnaK hydrolyzes its bound ATP, resulting in the formation of a stable complex. GrpE releases ADP from DnaK; ATP binding to DnaK triggers the release of the substrate protein, thus completing the reaction cycle. Several rounds of ATP-dependent interactions between DnaJ, DnaK and GrpE are required for fully efficient folding. This is Protein GrpE from Listeria monocytogenes serotype 4b (strain CLIP80459).